The primary structure comprises 381 residues: Fe-S cluster assembly protein DRE2 (381 aa).

Positions 8–165 (AQGSGRFLLL…KPDFGAQQAV (158 aa)) are N-terminal SAM-like domain. A disordered region spans residues 100 to 134 (RNRDNQIWGSGSDSAAGLGSSDGDGGGGEKMSSSE). Low complexity predominate over residues 108–118 (GSGSDSAAGLG). Residues 119-128 (SSDGDGGGGE) show a composition bias toward gly residues. Residues 166 to 273 (PLKLGRKKNL…EEELLGEYDM (108 aa)) are linker. Residues Cys-283, Cys-294, Cys-297, and Cys-299 each contribute to the [2Fe-2S] cluster site. The tract at residues 283–299 (CRPKAGKRRRACKDCTC) is fe-S binding site A. Positions 344, 347, 355, and 358 each coordinate [4Fe-4S] cluster. 2 consecutive short sequence motifs (cx2C motif) follow at residues 344 to 347 (CGNC) and 355 to 358 (CDGC). The fe-S binding site B stretch occupies residues 344-358 (CGNCALGDAFRCDGC).

It belongs to the anamorsin family. In terms of assembly, monomer. Interacts with TAH18. Interacts with MIA40. Requires [2Fe-2S] cluster as cofactor. [4Fe-4S] cluster serves as cofactor.

Its subcellular location is the cytoplasm. The protein resides in the mitochondrion intermembrane space. Functionally, component of the cytosolic iron-sulfur (Fe-S) protein assembly (CIA) machinery required for the maturation of extramitochondrial Fe-S proteins. Part of an electron transfer chain functioning in an early step of cytosolic Fe-S biogenesis, facilitating the de novo assembly of a [4Fe-4S] cluster on the scaffold complex CFD1-NBP35. Electrons are transferred to DRE2 from NADPH via the FAD- and FMN-containing protein TAH18. TAH18-DRE2 are also required for the assembly of the diferric tyrosyl radical cofactor of ribonucleotide reductase (RNR), probably by providing electrons for reduction during radical cofactor maturation in the catalytic small subunit RNR2. The chain is Fe-S cluster assembly protein DRE2 from Paracoccidioides brasiliensis (strain Pb18).